Here is an 80-residue protein sequence, read N- to C-terminus: Raniseptin-1 (80 aa).

An N-terminal signal peptide occupies residues 1–22; that stretch reads MAFLKKSLFLVLFLGIVSLSIC. The propeptide occupies 23–49; that stretch reads EEEKREGEEEEKQEEENEELSEEELRE.

It belongs to the frog skin active peptide (FSAP) family. Dermaseptin subfamily. As to expression, expressed by the skin glands.

It is found in the secreted. In terms of biological role, has antibacterial activity against the Gram-negative bacteria E.coli ATCC 25922 (MIC=5 uM), P.aeruginosa ATCC 27853 (MIC=10 uM) and X.citri (MIC&lt; 2 uM), and the Gram-positive bacterium S.aureus ATCC 29313 (MIC=20 uM). Does not have hemolytic activity against human erythrocytes. This Boana raniceps (Chaco tree frog) protein is Raniseptin-1.